The sequence spans 193 residues: Cysteine and glycine-rich protein 2 (193 aa).

An LIM zinc-binding 1 domain is found at 10-61 (CGACGRTVYHAEEVQCDGRSFHRCCFLCMVCRKNLDSTTVAIHDEEIYCKSC). A Nuclear localization signal motif is present at residues 64–69 (KKYGPK). K91 participates in a covalent cross-link: Glycyl lysine isopeptide (Lys-Gly) (interchain with G-Cter in SUMO2). 2 positions are modified to N6-acetyllysine: K112 and K131. The LIM zinc-binding 2 domain occupies 119-170 (CSRCGDSVYAAEKIIGAGKPWHKNCFRCAKCGKSLESTTLTEKEGEIYCKGC). K137 bears the N6-acetyllysine; alternate mark. K137 carries the post-translational modification N6-succinyllysine; alternate. N6-acetyllysine is present on K161.

In terms of assembly, interacts with KAT14. The LIM domain 1 is necessary and sufficient for this interaction. Interacts with GLRX3.

The protein localises to the nucleus. In terms of biological role, drastically down-regulated in response to PDGF-BB or cell injury, that promote smooth muscle cell proliferation and dedifferentiation. Seems to play a role in the development of the embryonic vascular system. The polypeptide is Cysteine and glycine-rich protein 2 (Csrp2) (Mus musculus (Mouse)).